Here is a 272-residue protein sequence, read N- to C-terminus: Dermonecrotic toxin LvSicTox-alphaIC1aiii (272 aa).

H4 is a catalytic residue. The Mg(2+) site is built by E24 and D26. The active-site Nucleophile is the H40. 2 disulfide bridges follow: C44/C50 and C46/C189. D84 is a binding site for Mg(2+).

The protein belongs to the arthropod phospholipase D family. Class II subfamily. Mg(2+) is required as a cofactor. In terms of tissue distribution, expressed by the venom gland.

It localises to the secreted. It catalyses the reaction an N-(acyl)-sphingosylphosphocholine = an N-(acyl)-sphingosyl-1,3-cyclic phosphate + choline. It carries out the reaction an N-(acyl)-sphingosylphosphoethanolamine = an N-(acyl)-sphingosyl-1,3-cyclic phosphate + ethanolamine. The enzyme catalyses a 1-acyl-sn-glycero-3-phosphocholine = a 1-acyl-sn-glycero-2,3-cyclic phosphate + choline. The catalysed reaction is a 1-acyl-sn-glycero-3-phosphoethanolamine = a 1-acyl-sn-glycero-2,3-cyclic phosphate + ethanolamine. Functionally, dermonecrotic toxins cleave the phosphodiester linkage between the phosphate and headgroup of certain phospholipids (sphingolipid and lysolipid substrates), forming an alcohol (often choline) and a cyclic phosphate. This toxin acts on sphingomyelin (SM). It may also act on ceramide phosphoethanolamine (CPE), lysophosphatidylcholine (LPC) and lysophosphatidylethanolamine (LPE), but not on lysophosphatidylserine (LPS), and lysophosphatidylglycerol (LPG). It acts by transphosphatidylation, releasing exclusively cyclic phosphate products as second products. Induces dermonecrosis, hemolysis, increased vascular permeability, edema, inflammatory response, and platelet aggregation. This Loxosceles variegata (Recluse spider) protein is Dermonecrotic toxin LvSicTox-alphaIC1aiii.